A 595-amino-acid polypeptide reads, in one-letter code: Sorting nexin-9 (595 aa).

The SH3 domain occupies 1–62; that stretch reads MATKARVMYD…PTDYVEILPS (62 aa). A disordered region spans residues 91–201; it reads SSSAASNNHQ…GNSRASSSSM (111 aa). Polar residues-rich tracts occupy residues 111 to 121 and 135 to 145; these read WSASKSGNWES and QRNTNTPNNWD. 2 positions are modified to phosphoserine: serine 116 and serine 121. The segment covering 160-169 has biased composition (acidic residues); sequence GDDDDWDEDW. Residues 191–201 show a composition bias toward polar residues; sequence RGNSRASSSSM. Phosphoserine is present on residues serine 197 and serine 200. Residues 201–213 form a critical for tubulation activity region; the sequence is MKIPLNKFPGFAK. A Phosphothreonine modification is found at threonine 216. Tyrosine 239 is subject to Phosphotyrosine. The 112-residue stretch at 250 to 361 folds into the PX domain; sequence FDCVVADPRK…QFLNFRDEKE (112 aa). A 1,2-diacyl-sn-glycero-3-phospho-(1D-myo-inositol-4,5-bisphosphate) is bound by residues arginine 286, lysine 288, and arginine 327. Residue lysine 288 is modified to N6-acetyllysine. The 204-residue stretch at 392–595 folds into the BAR domain; sequence LVEIEQKCEA…RQALSRFPVM (204 aa).

It belongs to the sorting nexin family. Homodimer, and homooligomer. Heterodimer with SNX18. Interacts with ITCH. Interacts (via SH3 domain) with TNK2, WASL and ACTR3. Identified in a complex with TNK2 and clathrin heavy chains. Identified in a complex with the AP-2 complex, clathrin and DNM2. Interacts (via SH3 domain) with DNM1 and DNM2. Identified in an oligomeric complex containing DNM1 and SNX9. Interacts with FCHSD1. Interacts with ADAM9 and ADAM15 cytoplasmic tails. In terms of processing, ubiquitinated by ITCH. Phosphorylated on tyrosine residues by TNK2. Phosphorylation promotes its activity in the degradation of EGFR. In terms of tissue distribution, widely expressed, with highest levels in heart and placenta, and lowest levels in thymus and peripheral blood leukocytes.

The protein resides in the cytoplasmic vesicle membrane. It localises to the cell membrane. Its subcellular location is the cytoplasmic vesicle. The protein localises to the clathrin-coated vesicle. It is found in the golgi apparatus. The protein resides in the trans-Golgi network. It localises to the cell projection. Its subcellular location is the ruffle. The protein localises to the cytoplasm. In terms of biological role, involved in endocytosis and intracellular vesicle trafficking, both during interphase and at the end of mitosis. Required for efficient progress through mitosis and cytokinesis. Required for normal formation of the cleavage furrow at the end of mitosis. Plays a role in endocytosis via clathrin-coated pits, but also clathrin-independent, actin-dependent fluid-phase endocytosis. Plays a role in macropinocytosis. Promotes internalization of TNFR. Promotes degradation of EGFR after EGF signaling. Stimulates the GTPase activity of DNM1. Promotes DNM1 oligomerization. Promotes activation of the Arp2/3 complex by WASL, and thereby plays a role in the reorganization of the F-actin cytoskeleton. Binds to membranes enriched in phosphatidylinositol 4,5-bisphosphate and promotes membrane tubulation. Has lower affinity for membranes enriched in phosphatidylinositol 3-phosphate. This is Sorting nexin-9 (SNX9) from Homo sapiens (Human).